Consider the following 435-residue polypeptide: GTPase Der (435 aa).

EngA-type G domains are found at residues 3–167 (NIVA…KDEG) and 176–351 (PRIA…ENRG). Residues 9–16 (GRPNVGKS), 56–60 (DTGGY), 119–122 (NKSD), 182–189 (GRPNAGKS), 229–233 (DTAGI), and 294–297 (NKWD) each bind GTP. Positions 352–435 (KRIPTSELND…VPISIVYRKK (84 aa)) constitute a KH-like domain.

This sequence belongs to the TRAFAC class TrmE-Era-EngA-EngB-Septin-like GTPase superfamily. EngA (Der) GTPase family. As to quaternary structure, associates with the 50S ribosomal subunit.

GTPase that plays an essential role in the late steps of ribosome biogenesis. The polypeptide is GTPase Der (Cytophaga hutchinsonii (strain ATCC 33406 / DSM 1761 / CIP 103989 / NBRC 15051 / NCIMB 9469 / D465)).